We begin with the raw amino-acid sequence, 412 residues long: MSGKIMAINAGSSSLKFQLFSMLNEQTGQHHEQVLCQGLIERIGMDDAIFNLRVGDVQWRETLPIADCRQGAEHLLRALIEHNVIDSLDEIIGVGHRVAHGGETFADSVLITPQVLDKIEQLGTLAPLHNPVNALGIRVFQLALPHASAVAVFDTAFHQTLSQTSFLYPLPWRYYEELGIRRYGFHGTSHKYVSAVCAERMGQPLAALRIVSCHLGNGSSICAIGHGKSVNTSMGFTPQAGVMMGTRSGDIDPSILPFIQQTEGKSAVEINHLINNQSGLLGISGISHDYRDVEQAADNGNRRAALALELFAERIRAVIGSYIVQLGGIDALIFTGGIGENSRSARQQICRELTFLGIELDQEKNIRNQFFIQQDTAPVQIAIVNTNEELMIARDVLRVALNLPVQPALATQ.

It belongs to the acetokinase family. PduW subfamily.

The protein resides in the cytoplasm. The enzyme catalyses propanoate + ATP = propanoyl phosphate + ADP. The protein operates within polyol metabolism; 1,2-propanediol degradation. Works with phosphate acetyltransferase (pta) to capture exogenous propionate and regenerate propionyl-CoA during degradation of 1,2-propanediol (1,2-PD). The chain is Propionate kinase from Yersinia enterocolitica serotype O:8 / biotype 1B (strain NCTC 13174 / 8081).